The following is a 422-amino-acid chain: Serine protease HTRA2, mitochondrial (422 aa).

Residues 1–17 (MALRGCHRLEVIFKRCI) constitute a mitochondrion transit peptide. Positions 18–74 (ASPVLHSQAGNRRSSQLAIKGVDPNSNGNSGQYQQNGEHKEKGWRRLVRFFVPFSLG) are excised as a propeptide. Residues 33–55 (QLAIKGVDPNSNGNSGQYQQNGE) are disordered. Over residues 42–53 (NSNGNSGQYQQN) the composition is skewed to low complexity. A helical membrane pass occupies residues 64–82 (LVRFFVPFSLGAAVSAAII). Short sequence motifs (IAP-binding) lie at residues 75–78 (AAVS) and 94–97 (SKMT). The interval 139 to 302 (SNGSGFIIEQ…IPIDYVKVFL (164 aa)) is serine protease. Residues H157, D189, and S266 each act as charge relay system in the active site. The region spanning 325–410 (MGITMLTLTP…TLDIVILRGV (86 aa)) is the PDZ domain.

It belongs to the peptidase S1C family. In terms of assembly, interacts with th/DIAP1 (via BIR 2 domain).

It localises to the mitochondrion intermembrane space. Its subcellular location is the mitochondrion membrane. It carries out the reaction Cleavage of non-polar aliphatic amino-acids at the P1 position, with a preference for Val, Ile and Met. At the P2 and P3 positions, Arg is selected most strongly with a secondary preference for other hydrophilic residues.. Serine protease that shows proteolytic activity against a non-specific substrate beta-casein. Promotes or induces cell death either by direct binding to and inhibition of BIRC proteins (also called inhibitor of apoptosis proteins, IAPs), leading to an increase in caspase activity, or by a BIRC inhibition-independent, caspase-independent and serine protease activity-dependent mechanism. Can antagonize antiapoptotic activity of th/Diap1 by directly inducing the degradation of th/Diap1. The protein is Serine protease HTRA2, mitochondrial of Drosophila simulans (Fruit fly).